The sequence spans 353 residues: Phosphate acyltransferase (353 aa).

Belongs to the PlsX family. Homodimer. Probably interacts with PlsY.

It is found in the cytoplasm. The enzyme catalyses a fatty acyl-[ACP] + phosphate = an acyl phosphate + holo-[ACP]. The protein operates within lipid metabolism; phospholipid metabolism. In terms of biological role, catalyzes the reversible formation of acyl-phosphate (acyl-PO(4)) from acyl-[acyl-carrier-protein] (acyl-ACP). This enzyme utilizes acyl-ACP as fatty acyl donor, but not acyl-CoA. This chain is Phosphate acyltransferase, found in Ralstonia pickettii (strain 12J).